A 150-amino-acid polypeptide reads, in one-letter code: Large ribosomal subunit protein bL9 (150 aa).

Belongs to the bacterial ribosomal protein bL9 family.

Binds to the 23S rRNA. The sequence is that of Large ribosomal subunit protein bL9 from Methylibium petroleiphilum (strain ATCC BAA-1232 / LMG 22953 / PM1).